Reading from the N-terminus, the 149-residue chain is Large ribosomal subunit protein uL15 (149 aa).

Over residues 1 to 28 (MVIKIHDLRPAPGSKRDKIRVGRGEGSK) the composition is skewed to basic and acidic residues. The disordered stretch occupies residues 1–54 (MVIKIHDLRPAPGSKRDKIRVGRGEGSKGKTAGRGTKGTKARKNVSPRFEGGQM).

Belongs to the universal ribosomal protein uL15 family. As to quaternary structure, part of the 50S ribosomal subunit.

Its function is as follows. Binds to the 23S rRNA. In Saccharopolyspora erythraea (strain ATCC 11635 / DSM 40517 / JCM 4748 / NBRC 13426 / NCIMB 8594 / NRRL 2338), this protein is Large ribosomal subunit protein uL15.